The following is an 827-amino-acid chain: Cadherin-17 (827 aa).

A signal peptide spans 1-21; that stretch reads MVSAQLHFLCLLTLYLTGAYG. Topologically, residues 22 to 786 are extracellular; it reads QEGKFSGPLK…NQVGIPTVGM (765 aa). 7 consecutive Cadherin domains span residues 29–127, 128–243, 244–339, 340–448, 449–565, 566–666, and 667–776; these read PLKP…TFLQ, TKYE…APEP, VEIR…PPTC, LSQV…IPIF, ERSD…VPVF, PQQI…PPRL, and AKDY…RPAG. N-linked (GlcNAc...) asparagine glycans are attached at residues asparagine 148, asparagine 183, asparagine 249, asparagine 418, asparagine 545, asparagine 573, and asparagine 721. A helical transmembrane segment spans residues 787–807; that stretch reads AVGILLTTFLVIGIILAVVFI. Over 808-827 the chain is Cytoplasmic; that stretch reads RMRKDKVEDPQSPENKPLRS.

In terms of tissue distribution, liver and intestine.

Its subcellular location is the cell membrane. Functionally, cadherins are calcium-dependent cell adhesion proteins. They preferentially interact with themselves in a homophilic manner in connecting cells; cadherins may thus contribute to the sorting of heterogeneous cell types. LI-cadherin may have a role in the morphological organization of liver and intestine. The sequence is that of Cadherin-17 (Cdh17) from Rattus norvegicus (Rat).